A 732-amino-acid polypeptide reads, in one-letter code: Zinc-exporting P-type ATPase (732 aa).

Residues 29-96 enclose the HMA domain; it reads GRMRVRADWV…AIGGAKHVAA (68 aa). 6 helical membrane passes run 105–123, 146–164, 172–186, 195–209, 342–366, and 372–390; these read HSTE…GGAA, MVAT…RGAL, AGTD…IASL, LTVL…YLQD, VGEN…LVTG, and MTML…TPTA. The 4-aspartylphosphate intermediate role is filled by aspartate 423. Mg(2+) is bound by residues aspartate 423, threonine 425, and aspartate 625. 2 helical membrane-spanning segments follow: residues 676–695 and 705–724; these read AVDV…AAGL and PVLA…ANSS.

The protein belongs to the cation transport ATPase (P-type) (TC 3.A.3) family. Type IB subfamily.

It localises to the cell membrane. It catalyses the reaction Zn(2+)(in) + ATP + H2O = Zn(2+)(out) + ADP + phosphate + H(+). Its function is as follows. Zn(2+) efflux transporter which is involved in detoxification of zinc during infection. The sequence is that of Zinc-exporting P-type ATPase from Mycobacterium marinum (strain ATCC BAA-535 / M).